The following is a 554-amino-acid chain: MDRDISYQQNYTSTGATATSSRQPSTDNNADTNFLKVMSEFKYNFNSPLPTTTQFPTPYSSNQYQQTQDHFANTDAHNSSSNESSLVENSILPHHQQIQQQQQQQQQQQQQQQALGSLVPPAVTRTDTSETLDDINVQPSSVLQFGNSLPSEFLVASPEQFKEFLLDSPSTNFNFFHKTPAKTPLRFVTDSNGAQQSTTENPGQQQNVFSNVDLNNLLKSNGKTPSSSCTGAFSRTPLSKIDMNLMFNQPLPTSPSKRFSSLSLTPYGRKILNDVGTPYAKALISSNSALVDFQKARKDITTNATSIGLENANNILQRTPLRSNNKKLFIKTPQDTINSTSTLTKDNENKQDIYGSSPTTIQLNSSITKSISKLDNSRIPLLASRSDNILDSNVDDQLFDLGLTRLPLSPTPNCNSLHSTTTGTSALQIPELPKMGSFRSDTGINPISSSNTVSFKSKSGNNNSKGRIKKNGKKPSKFQIIVANIDQFNQDTSSSSLSSSLNASSSAGNSNSNVTKKRASKLKRSQSLLSDSGSKSQARKSCNSKSNGNLFNSQ.

Disordered stretches follow at residues 1-31 (MDRDISYQQNYTSTGATATSSRQPSTDNNAD) and 98-117 (IQQQQQQQQQQQQQQQALGS). Positions 98–113 (IQQQQQQQQQQQQQQQ) are enriched in low complexity. Position 319 is a phosphothreonine; by CDC28 (threonine 319). Disordered regions lie at residues 410–475 (PTPN…GKKP) and 493–554 (SSSS…FNSQ). Over residues 411 to 427 (TPNCNSLHSTTTGTSAL) the composition is skewed to polar residues. The segment covering 448–465 (SSSNTVSFKSKSGNNNSK) has biased composition (low complexity). The span at 466–475 (GRIKKNGKKP) shows a compositional bias: basic residues. Residues 493–513 (SSSSLSSSLNASSSAGNSNSN) are compositionally biased toward low complexity. Basic residues predominate over residues 515–524 (TKKRASKLKR). The segment covering 525–536 (SQSLLSDSGSKS) has biased composition (low complexity). Positions 539 to 554 (RKSCNSKSNGNLFNSQ) are enriched in polar residues.

In terms of assembly, forms an activator complex with FKH2. Post-translationally, phosphorylation of Thr-319 by CDC28 is required for the interaction with FKH2 and recruitment to promoters.

It localises to the cytoplasm. Its subcellular location is the nucleus. Functionally, transcription activator involved in G2/M transcription through its association with FKH2. This Saccharomyces cerevisiae (strain ATCC 204508 / S288c) (Baker's yeast) protein is Nuclear division defective protein 1 (NDD1).